Consider the following 344-residue polypeptide: Phenylalanine--tRNA ligase alpha subunit (344 aa).

Glutamate 255 contributes to the Mg(2+) binding site.

It belongs to the class-II aminoacyl-tRNA synthetase family. Phe-tRNA synthetase alpha subunit type 1 subfamily. In terms of assembly, tetramer of two alpha and two beta subunits. The cofactor is Mg(2+).

The protein resides in the cytoplasm. The enzyme catalyses tRNA(Phe) + L-phenylalanine + ATP = L-phenylalanyl-tRNA(Phe) + AMP + diphosphate + H(+). This chain is Phenylalanine--tRNA ligase alpha subunit, found in Cytophaga hutchinsonii (strain ATCC 33406 / DSM 1761 / CIP 103989 / NBRC 15051 / NCIMB 9469 / D465).